A 315-amino-acid polypeptide reads, in one-letter code: MSIPNLGKKIIVTVPSTTANLGPGFDCLGAALDLYNEFIFTRIEGDGDRFDLIMESTDGNHLRGGPENLVFRAAQKVWESADVSPFALEARVKLAVPPARGLGSSATAIVAGLIGANAIMNSPLPKEKLLELAIDIEGHPDNVVPSLLGGLCLTARSSSQRWRIIRCDWHDSIKAVIAIPAIRLSTSEARRVMPKNIPISDAVTNMGALTLLLNGLKTGNDELIKEGMFDKLHEPYRWKLIKGGLEVKEAALQAGALGCAISGAGPSILALCKSNNGKVVSQAMVKAWENLGIASRAPFLNVQTKGSQFKTISGK.

97–107 (PPARGLGSSAT) contributes to the ATP binding site.

The protein belongs to the GHMP kinase family. Homoserine kinase subfamily.

The protein localises to the cytoplasm. The enzyme catalyses L-homoserine + ATP = O-phospho-L-homoserine + ADP + H(+). It participates in amino-acid biosynthesis; L-threonine biosynthesis; L-threonine from L-aspartate: step 4/5. In terms of biological role, catalyzes the ATP-dependent phosphorylation of L-homoserine to L-homoserine phosphate. The protein is Homoserine kinase of Prochlorococcus marinus (strain MIT 9515).